We begin with the raw amino-acid sequence, 89 residues long: uncharacterized protein (89 aa).

This is an uncharacterized protein from Shigella flexneri.